Here is a 156-residue protein sequence, read N- to C-terminus: Cyclic pyranopterin monophosphate synthase (156 aa).

Substrate-binding positions include 73–75 (LCH) and 110–111 (ME). Residue Asp125 is part of the active site.

It belongs to the MoaC family. In terms of assembly, homohexamer; trimer of dimers.

The enzyme catalyses (8S)-3',8-cyclo-7,8-dihydroguanosine 5'-triphosphate = cyclic pyranopterin phosphate + diphosphate. Its pathway is cofactor biosynthesis; molybdopterin biosynthesis. Its function is as follows. Catalyzes the conversion of (8S)-3',8-cyclo-7,8-dihydroguanosine 5'-triphosphate to cyclic pyranopterin monophosphate (cPMP). This Pseudomonas putida (strain W619) protein is Cyclic pyranopterin monophosphate synthase.